A 543-amino-acid polypeptide reads, in one-letter code: Ribonuclease Y (543 aa).

The chain crosses the membrane as a helical span at residues 4–24 (IIMIPVATAIVSLLVGTVIGY). Residues 233 to 296 (TVSVVDLPNE…EIAKRAMERL (64 aa)) form the KH domain. Residues 359–452 (VLSHSIEVGK…VVAADTISSA (94 aa)) enclose the HD domain.

This sequence belongs to the RNase Y family.

The protein resides in the cell membrane. Its function is as follows. Endoribonuclease that initiates mRNA decay. The sequence is that of Ribonuclease Y from Lactobacillus helveticus (strain DPC 4571).